The chain runs to 226 residues: MLTWLTRDSLTFPPLEKALHDPNGLLAAGGDLSPERLVQAYRHGCFPWYQDGQPILWWSPDPRTVLLPDQLHVSRSLAKLMRQGRYQVSFDTDFPAVIAACAAPRDYADGTWITDTMRNAYCELHRRGIAHSVEVRQDGELVGGLYGLAMGQLFFGESMFSRADNASKVGFVTLVNHLRDAGFVLIDCQMPTNHLHSLGAHAISRAEFASYLARHLDQPNSASWVA.

The protein belongs to the L/F-transferase family.

Its subcellular location is the cytoplasm. It catalyses the reaction N-terminal L-lysyl-[protein] + L-leucyl-tRNA(Leu) = N-terminal L-leucyl-L-lysyl-[protein] + tRNA(Leu) + H(+). The enzyme catalyses N-terminal L-arginyl-[protein] + L-leucyl-tRNA(Leu) = N-terminal L-leucyl-L-arginyl-[protein] + tRNA(Leu) + H(+). It carries out the reaction L-phenylalanyl-tRNA(Phe) + an N-terminal L-alpha-aminoacyl-[protein] = an N-terminal L-phenylalanyl-L-alpha-aminoacyl-[protein] + tRNA(Phe). Functionally, functions in the N-end rule pathway of protein degradation where it conjugates Leu, Phe and, less efficiently, Met from aminoacyl-tRNAs to the N-termini of proteins containing an N-terminal arginine or lysine. The polypeptide is Leucyl/phenylalanyl-tRNA--protein transferase (Pseudomonas putida (strain ATCC 47054 / DSM 6125 / CFBP 8728 / NCIMB 11950 / KT2440)).